Reading from the N-terminus, the 223-residue chain is MTEHPVVNGERRTVFGKKVKRLRRLGRTPGVIAGPVVPEPIPVAVDEREFERAFHHVGTARLVDLVVDGTTYPVFIREVALHPVTREILNVEFYAPDLARPVTVTVPVLTVGELAPDVVGVVTIQTPELEIRALPDAVPEHIEVDLSLLSTERTVIHAGEIPLPVGVELETDPDVVVVVVEEAEEAEAAEEATRVLAEEIGDRPRSAEEGAAPVKERKLRESE.

The segment at 198 to 223 is disordered; that stretch reads EEIGDRPRSAEEGAAPVKERKLRESE.

This sequence belongs to the bacterial ribosomal protein bL25 family. CTC subfamily. As to quaternary structure, part of the 50S ribosomal subunit; part of the 5S rRNA/L5/L18/L25 subcomplex. Contacts the 5S rRNA. Binds to the 5S rRNA independently of L5 and L18.

In terms of biological role, this is one of the proteins that binds to the 5S RNA in the ribosome where it forms part of the central protuberance. The chain is Large ribosomal subunit protein bL25 from Thermomicrobium roseum (strain ATCC 27502 / DSM 5159 / P-2).